The chain runs to 307 residues: N-acetylmuramic acid 6-phosphate etherase (307 aa).

Residues 59-222 (TADRLRQGGR…STGVMVKLGK (164 aa)) enclose the SIS domain. Residue Glu87 is the Proton donor of the active site. The active site involves Glu118.

The protein belongs to the GCKR-like family. MurNAc-6-P etherase subfamily. Homodimer.

It carries out the reaction N-acetyl-D-muramate 6-phosphate + H2O = N-acetyl-D-glucosamine 6-phosphate + (R)-lactate. The protein operates within amino-sugar metabolism; N-acetylmuramate degradation. Specifically catalyzes the cleavage of the D-lactyl ether substituent of MurNAc 6-phosphate, producing GlcNAc 6-phosphate and D-lactate. The chain is N-acetylmuramic acid 6-phosphate etherase from Trichormus variabilis (strain ATCC 29413 / PCC 7937) (Anabaena variabilis).